Reading from the N-terminus, the 313-residue chain is Porphobilinogen deaminase (313 aa).

Position 242 is an S-(dipyrrolylmethanemethyl)cysteine (Cys-242).

The protein belongs to the HMBS family. In terms of assembly, monomer. Dipyrromethane serves as cofactor.

The enzyme catalyses 4 porphobilinogen + H2O = hydroxymethylbilane + 4 NH4(+). It functions in the pathway porphyrin-containing compound metabolism; protoporphyrin-IX biosynthesis; coproporphyrinogen-III from 5-aminolevulinate: step 2/4. Functionally, tetrapolymerization of the monopyrrole PBG into the hydroxymethylbilane pre-uroporphyrinogen in several discrete steps. The polypeptide is Porphobilinogen deaminase (Enterobacter sp. (strain 638)).